The following is a 454-amino-acid chain: tRNA modification GTPase MnmE (454 aa).

3 residues coordinate (6S)-5-formyl-5,6,7,8-tetrahydrofolate: Arg-23, Glu-80, and Lys-120. The TrmE-type G domain maps to 216-377; it reads GMKVVIAGRP…LRNHLKQSMG (162 aa). Asn-226 contacts K(+). GTP is bound by residues 226-231, 245-251, 270-273, 335-338, and 358-360; these read NAGKSS, TDIAGTT, DTAG, NKAD, and SAR. Residue Ser-230 coordinates Mg(2+). K(+) is bound by residues Thr-245, Ile-247, and Thr-250. Thr-251 is a Mg(2+) binding site. Residue Lys-454 coordinates (6S)-5-formyl-5,6,7,8-tetrahydrofolate.

Belongs to the TRAFAC class TrmE-Era-EngA-EngB-Septin-like GTPase superfamily. TrmE GTPase family. Homodimer. Heterotetramer of two MnmE and two MnmG subunits. K(+) is required as a cofactor.

It localises to the cytoplasm. In terms of biological role, exhibits a very high intrinsic GTPase hydrolysis rate. Involved in the addition of a carboxymethylaminomethyl (cmnm) group at the wobble position (U34) of certain tRNAs, forming tRNA-cmnm(5)s(2)U34. This Escherichia coli (strain SMS-3-5 / SECEC) protein is tRNA modification GTPase MnmE.